The chain runs to 208 residues: Probable thymidylate kinase (208 aa).

ATP is bound at residue 9-16 (GIDGAGKS).

The protein belongs to the thymidylate kinase family.

It catalyses the reaction dTMP + ATP = dTDP + ADP. This is Probable thymidylate kinase from Thermococcus gammatolerans (strain DSM 15229 / JCM 11827 / EJ3).